The following is a 361-amino-acid chain: Phospho-N-acetylmuramoyl-pentapeptide-transferase (361 aa).

Helical transmembrane passes span 28–48 (LAILTSFFFTFIIAPPCIRWL), 73–93 (TMGGIIITASVLVAVLMWGNL), 98–118 (MWIMIISFLGFGLIGFIDDYL), 132–152 (YKLFAQLLLASSVTLFLYFNP), 168–188 (WLIDLGIFYLPFAIFVIVGSS), 199–219 (GLAAGLVGIASIVNAVLLYIS), 235–255 (GTGELAVFCGAMLGACLGFLW), 263–283 (VFMGDVGSLSLGGALGSLAVI), 288–308 (IVLALVGGIFVVEALSVILQV), and 338–358 (KVIVRFWIIGIILALLSLLTL).

This sequence belongs to the glycosyltransferase 4 family. MraY subfamily. Requires Mg(2+) as cofactor.

It localises to the cell inner membrane. It carries out the reaction UDP-N-acetyl-alpha-D-muramoyl-L-alanyl-gamma-D-glutamyl-meso-2,6-diaminopimeloyl-D-alanyl-D-alanine + di-trans,octa-cis-undecaprenyl phosphate = di-trans,octa-cis-undecaprenyl diphospho-N-acetyl-alpha-D-muramoyl-L-alanyl-D-glutamyl-meso-2,6-diaminopimeloyl-D-alanyl-D-alanine + UMP. Its pathway is cell wall biogenesis; peptidoglycan biosynthesis. In terms of biological role, catalyzes the initial step of the lipid cycle reactions in the biosynthesis of the cell wall peptidoglycan: transfers peptidoglycan precursor phospho-MurNAc-pentapeptide from UDP-MurNAc-pentapeptide onto the lipid carrier undecaprenyl phosphate, yielding undecaprenyl-pyrophosphoryl-MurNAc-pentapeptide, known as lipid I. This chain is Phospho-N-acetylmuramoyl-pentapeptide-transferase, found in Thermodesulfovibrio yellowstonii (strain ATCC 51303 / DSM 11347 / YP87).